The sequence spans 319 residues: Coiled-coil domain-containing protein PF3D7_1144200 (319 aa).

Basic and acidic residues predominate over residues Met-1–Asp-12. 2 disordered regions span residues Met-1–Ser-43 and Lys-112–Asn-158. The segment covering Cys-16–Pro-26 has biased composition (polar residues). 2 stretches are compositionally biased toward basic and acidic residues: residues Lys-27–Lys-36 and Lys-112–Thr-131. Coiled coils occupy residues Asp-100 to Ser-134, Glu-166 to Asn-242, and Asn-281 to Ile-310. Residues Asn-132–Asn-150 show a composition bias toward low complexity.

This is Coiled-coil domain-containing protein PF3D7_1144200 from Plasmodium falciparum (isolate 3D7).